The sequence spans 150 residues: 3-hydroxyacyl-[acyl-carrier-protein] dehydratase FabZ (150 aa).

His-54 is a catalytic residue.

This sequence belongs to the thioester dehydratase family. FabZ subfamily.

The protein resides in the cytoplasm. It carries out the reaction a (3R)-hydroxyacyl-[ACP] = a (2E)-enoyl-[ACP] + H2O. Its function is as follows. Involved in unsaturated fatty acids biosynthesis. Catalyzes the dehydration of short chain beta-hydroxyacyl-ACPs and long chain saturated and unsaturated beta-hydroxyacyl-ACPs. This is 3-hydroxyacyl-[acyl-carrier-protein] dehydratase FabZ from Chromobacterium violaceum (strain ATCC 12472 / DSM 30191 / JCM 1249 / CCUG 213 / NBRC 12614 / NCIMB 9131 / NCTC 9757 / MK).